Here is a 501-residue protein sequence, read N- to C-terminus: uncharacterized protein (501 aa).

Disordered stretches follow at residues 179–404 (EKTS…DETA) and 480–501 (SDDT…DDSD). Basic and acidic residues predominate over residues 191-200 (SRNESQDKSR). Over residues 201–214 (DKSRKKVCNTHKNK) the composition is skewed to basic residues. The span at 215–226 (KTLDNVKPDKNI) shows a compositional bias: basic and acidic residues. The span at 231–274 (SSNKFTTNKPKSNKNSSDSDGSTKTTKSTRSTKSTKSSKSQKST) shows a compositional bias: low complexity. A compositionally biased stretch (basic and acidic residues) spans 304 to 316 (NPKESINHKKNDS). Over residues 333-352 (DSTNCRKSNRTTTRDVTNSD) the composition is skewed to polar residues. The span at 379–403 (EQSDLTEDETEENVSEEDETEEDET) shows a compositional bias: acidic residues.

This is an uncharacterized protein from Acanthamoeba polyphaga mimivirus (APMV).